The chain runs to 121 residues: Putative membrane protein insertion efficiency factor (121 aa).

Positions 97–121 (VPARRDRHAGGRRCCPANVDEQRST) are disordered.

It belongs to the UPF0161 family.

Its subcellular location is the cell membrane. Could be involved in insertion of integral membrane proteins into the membrane. The sequence is that of Putative membrane protein insertion efficiency factor from Rhodococcus jostii (strain RHA1).